A 217-amino-acid chain; its full sequence is Protein-L-isoaspartate O-methyltransferase (217 aa).

Serine 64 is an active-site residue.

Belongs to the methyltransferase superfamily. L-isoaspartyl/D-aspartyl protein methyltransferase family.

The protein localises to the cytoplasm. The enzyme catalyses [protein]-L-isoaspartate + S-adenosyl-L-methionine = [protein]-L-isoaspartate alpha-methyl ester + S-adenosyl-L-homocysteine. In terms of biological role, catalyzes the methyl esterification of L-isoaspartyl residues in peptides and proteins that result from spontaneous decomposition of normal L-aspartyl and L-asparaginyl residues. It plays a role in the repair and/or degradation of damaged proteins. The chain is Protein-L-isoaspartate O-methyltransferase from Rhodopseudomonas palustris (strain BisB5).